The primary structure comprises 404 residues: uncharacterized protein (404 aa).

8 helical membrane passes run 1 to 21 (MNVL…FLFS), 32 to 52 (VIVG…WEAG), 89 to 109 (AFAL…AVLY), 182 to 202 (LFGY…SFMA), 261 to 281 (LAFV…FGLF), 285 to 305 (GVTL…LIGV), 344 to 364 (ATII…AIML), and 384 to 404 (KAVL…GMFI).

It belongs to the concentrative nucleoside transporter (CNT) (TC 2.A.41) family.

It localises to the cell membrane. This is an uncharacterized protein from Bacillus subtilis (strain 168).